We begin with the raw amino-acid sequence, 111 residues long: Large ribosomal subunit protein uL22 (111 aa).

Belongs to the universal ribosomal protein uL22 family. Part of the 50S ribosomal subunit.

Functionally, this protein binds specifically to 23S rRNA; its binding is stimulated by other ribosomal proteins, e.g. L4, L17, and L20. It is important during the early stages of 50S assembly. It makes multiple contacts with different domains of the 23S rRNA in the assembled 50S subunit and ribosome. Its function is as follows. The globular domain of the protein is located near the polypeptide exit tunnel on the outside of the subunit, while an extended beta-hairpin is found that lines the wall of the exit tunnel in the center of the 70S ribosome. The chain is Large ribosomal subunit protein uL22 from Geotalea daltonii (strain DSM 22248 / JCM 15807 / FRC-32) (Geobacter daltonii).